Reading from the N-terminus, the 108-residue chain is Urease subunit beta (108 aa).

It belongs to the urease beta subunit family. Heterotrimer of UreA (gamma), UreB (beta) and UreC (alpha) subunits. Three heterotrimers associate to form the active enzyme.

It localises to the cytoplasm. It catalyses the reaction urea + 2 H2O + H(+) = hydrogencarbonate + 2 NH4(+). Its pathway is nitrogen metabolism; urea degradation; CO(2) and NH(3) from urea (urease route): step 1/1. This chain is Urease subunit beta, found in Microcystis aeruginosa (strain NIES-843 / IAM M-2473).